The chain runs to 317 residues: Methionyl-tRNA formyltransferase (317 aa).

109–112 serves as a coordination point for (6S)-5,6,7,8-tetrahydrofolate; that stretch reads SLLP.

Belongs to the Fmt family.

It catalyses the reaction L-methionyl-tRNA(fMet) + (6R)-10-formyltetrahydrofolate = N-formyl-L-methionyl-tRNA(fMet) + (6S)-5,6,7,8-tetrahydrofolate + H(+). Attaches a formyl group to the free amino group of methionyl-tRNA(fMet). The formyl group appears to play a dual role in the initiator identity of N-formylmethionyl-tRNA by promoting its recognition by IF2 and preventing the misappropriation of this tRNA by the elongation apparatus. In Halalkalibacterium halodurans (strain ATCC BAA-125 / DSM 18197 / FERM 7344 / JCM 9153 / C-125) (Bacillus halodurans), this protein is Methionyl-tRNA formyltransferase.